The sequence spans 230 residues: Orotidine 5'-phosphate decarboxylase (230 aa).

Residues Asp-10, Lys-31, 58–67 (DLKLHDIPNT), Thr-117, Arg-179, Gln-188, Gly-208, and Arg-209 contribute to the substrate site. Lys-60 serves as the catalytic Proton donor.

The protein belongs to the OMP decarboxylase family. Type 1 subfamily. Homodimer.

It catalyses the reaction orotidine 5'-phosphate + H(+) = UMP + CO2. The protein operates within pyrimidine metabolism; UMP biosynthesis via de novo pathway; UMP from orotate: step 2/2. In terms of biological role, catalyzes the decarboxylation of orotidine 5'-monophosphate (OMP) to uridine 5'-monophosphate (UMP). In Staphylococcus epidermidis (strain ATCC 12228 / FDA PCI 1200), this protein is Orotidine 5'-phosphate decarboxylase.